A 541-amino-acid chain; its full sequence is Chaperonin GroEL (541 aa).

ATP contacts are provided by residues 30–33, Lys51, 87–91, Gly415, 479–481, and Asp495; these read TLGP, DGTTT, and NAA.

The protein belongs to the chaperonin (HSP60) family. As to quaternary structure, forms a cylinder of 14 subunits composed of two heptameric rings stacked back-to-back. Interacts with the co-chaperonin GroES.

It is found in the cytoplasm. It carries out the reaction ATP + H2O + a folded polypeptide = ADP + phosphate + an unfolded polypeptide.. Functionally, together with its co-chaperonin GroES, plays an essential role in assisting protein folding. The GroEL-GroES system forms a nano-cage that allows encapsulation of the non-native substrate proteins and provides a physical environment optimized to promote and accelerate protein folding. The chain is Chaperonin GroEL from Acinetobacter baumannii (strain SDF).